The following is a 429-amino-acid chain: Chaperone SurA (429 aa).

The first 18 residues, 1 to 18 (MFKRIALVCALFSGICFA), serve as a signal peptide directing secretion. PpiC domains are found at residues 170–271 (NLTY…KLVA) and 281–380 (ITQT…EVIA).

Its subcellular location is the periplasm. The enzyme catalyses [protein]-peptidylproline (omega=180) = [protein]-peptidylproline (omega=0). Functionally, chaperone involved in the correct folding and assembly of outer membrane proteins. Recognizes specific patterns of aromatic residues and the orientation of their side chains, which are found more frequently in integral outer membrane proteins. May act in both early periplasmic and late outer membrane-associated steps of protein maturation. This Legionella pneumophila (strain Paris) protein is Chaperone SurA.